We begin with the raw amino-acid sequence, 216 residues long: Urease accessory protein UreG (216 aa).

25–32 (GPVGSGKT) contributes to the GTP binding site.

The protein belongs to the SIMIBI class G3E GTPase family. UreG subfamily. Homodimer. UreD, UreF and UreG form a complex that acts as a GTP-hydrolysis-dependent molecular chaperone, activating the urease apoprotein by helping to assemble the nickel containing metallocenter of UreC. The UreE protein probably delivers the nickel.

It is found in the cytoplasm. Functionally, facilitates the functional incorporation of the urease nickel metallocenter. This process requires GTP hydrolysis, probably effectuated by UreG. This is Urease accessory protein UreG from Burkholderia pseudomallei (strain 1710b).